We begin with the raw amino-acid sequence, 733 residues long: uncharacterized protein (733 aa).

Residues 174 to 194 traverse the membrane as a helical segment; sequence WAVMILASLRPELFGPIIIAG.

It is found in the membrane. This is an uncharacterized protein from Rhizobium meliloti (Ensifer meliloti).